A 126-amino-acid polypeptide reads, in one-letter code: Aspartate 1-decarboxylase (126 aa).

Ser25 serves as the catalytic Schiff-base intermediate with substrate; via pyruvic acid. Ser25 bears the Pyruvic acid (Ser) mark. Thr57 is a substrate binding site. Catalysis depends on Tyr58, which acts as the Proton donor. 73–75 (GAA) is a substrate binding site.

It belongs to the PanD family. In terms of assembly, heterooctamer of four alpha and four beta subunits. Requires pyruvate as cofactor. In terms of processing, is synthesized initially as an inactive proenzyme, which is activated by self-cleavage at a specific serine bond to produce a beta-subunit with a hydroxyl group at its C-terminus and an alpha-subunit with a pyruvoyl group at its N-terminus.

It localises to the cytoplasm. It catalyses the reaction L-aspartate + H(+) = beta-alanine + CO2. Its pathway is cofactor biosynthesis; (R)-pantothenate biosynthesis; beta-alanine from L-aspartate: step 1/1. Catalyzes the pyruvoyl-dependent decarboxylation of aspartate to produce beta-alanine. This chain is Aspartate 1-decarboxylase, found in Photorhabdus laumondii subsp. laumondii (strain DSM 15139 / CIP 105565 / TT01) (Photorhabdus luminescens subsp. laumondii).